Here is an 81-residue protein sequence, read N- to C-terminus: LYR motif-containing protein At3g19508 (81 aa).

It belongs to the complex I LYR family. LYRM9 subfamily.

This is LYR motif-containing protein At3g19508 from Arabidopsis thaliana (Mouse-ear cress).